The primary structure comprises 598 residues: Elongation factor 4 (598 aa).

Residues 4–181 (KKIRNFAIIA…AIVNLIPPPQ (178 aa)) enclose the tr-type G domain. GTP is bound by residues 16 to 21 (DHGKST) and 128 to 131 (NKID).

The protein belongs to the TRAFAC class translation factor GTPase superfamily. Classic translation factor GTPase family. LepA subfamily.

Its subcellular location is the cell membrane. The enzyme catalyses GTP + H2O = GDP + phosphate + H(+). In terms of biological role, required for accurate and efficient protein synthesis under certain stress conditions. May act as a fidelity factor of the translation reaction, by catalyzing a one-codon backward translocation of tRNAs on improperly translocated ribosomes. Back-translocation proceeds from a post-translocation (POST) complex to a pre-translocation (PRE) complex, thus giving elongation factor G a second chance to translocate the tRNAs correctly. Binds to ribosomes in a GTP-dependent manner. The sequence is that of Elongation factor 4 from Mesomycoplasma hyopneumoniae (strain 7448) (Mycoplasma hyopneumoniae).